The primary structure comprises 279 residues: Pantothenate synthetase (279 aa).

31-38 (MGNLHGGH) is a binding site for ATP. Catalysis depends on H38, which acts as the Proton donor. Q62 provides a ligand contact to (R)-pantoate. Q62 contacts beta-alanine. 150 to 153 (GRKD) contributes to the ATP binding site. Q156 contacts (R)-pantoate. ATP-binding positions include V179 and 187-190 (KSSR).

This sequence belongs to the pantothenate synthetase family. Homodimer.

It localises to the cytoplasm. The catalysed reaction is (R)-pantoate + beta-alanine + ATP = (R)-pantothenate + AMP + diphosphate + H(+). The protein operates within cofactor biosynthesis; (R)-pantothenate biosynthesis; (R)-pantothenate from (R)-pantoate and beta-alanine: step 1/1. Functionally, catalyzes the condensation of pantoate with beta-alanine in an ATP-dependent reaction via a pantoyl-adenylate intermediate. The chain is Pantothenate synthetase from Stenotrophomonas maltophilia (strain K279a).